The chain runs to 148 residues: Cytochrome c-type biogenesis protein CcmE (148 aa).

Residues 1-7 (MKPRHKK) are Cytoplasmic-facing. The helical; Signal-anchor for type II membrane protein transmembrane segment at 8-28 (LAIIASSVTALGVASVLVLNA) threads the bilayer. Topologically, residues 29 to 148 (FQSNLVFFFS…ADKARKTVMQ (120 aa)) are periplasmic. The heme site is built by H123 and Y127.

It belongs to the CcmE/CycJ family.

It is found in the cell inner membrane. Its function is as follows. Heme chaperone required for the biogenesis of c-type cytochromes. Transiently binds heme delivered by CcmC and transfers the heme to apo-cytochromes in a process facilitated by CcmF and CcmH. This is Cytochrome c-type biogenesis protein CcmE from Nitrosospira multiformis (strain ATCC 25196 / NCIMB 11849 / C 71).